The following is a 251-amino-acid chain: Haloacid dehalogenase-like hydrolase domain-containing protein 3 (251 aa).

Lysine 15 bears the N6-acetyllysine; alternate mark. Lysine 15 bears the N6-succinyllysine; alternate mark. Lysine 130 is subject to N6-acetyllysine.

The protein belongs to the HAD-like hydrolase superfamily.

This is Haloacid dehalogenase-like hydrolase domain-containing protein 3 (HDHD3) from Bos taurus (Bovine).